The primary structure comprises 261 residues: Complex I assembly factor TIMMDC1, mitochondrial (261 aa).

A run of 3 helical transmembrane segments spans residues 67-87 (LNSVYQAGFLGFLIGAIYGGV), 131-151 (WGWRVGLFTTSYFGIITCMSV), and 183-203 (AGGIIGGFLGGVAGVTSLLLM).

This sequence belongs to the Tim17/Tim22/Tim23 family. In terms of assembly, associates with complex I assembly intermediates during its biogenesis in a NdufAF3 and NdufAF4 dependent manner.

The protein resides in the membrane. Functionally, chaperone protein involved in the assembly of the mitochondrial NADH:ubiquinone oxidoreductase complex (complex I). Essential for viability. In Drosophila melanogaster (Fruit fly), this protein is Complex I assembly factor TIMMDC1, mitochondrial.